A 488-amino-acid polypeptide reads, in one-letter code: Glycogen synthase (488 aa).

ADP-alpha-D-glucose is bound at residue Arg20.

The protein belongs to the glycosyltransferase 1 family. Bacterial/plant glycogen synthase subfamily.

The catalysed reaction is [(1-&gt;4)-alpha-D-glucosyl](n) + ADP-alpha-D-glucose = [(1-&gt;4)-alpha-D-glucosyl](n+1) + ADP + H(+). The protein operates within glycan biosynthesis; glycogen biosynthesis. Synthesizes alpha-1,4-glucan chains using ADP-glucose. The sequence is that of Glycogen synthase from Chlorobaculum tepidum (strain ATCC 49652 / DSM 12025 / NBRC 103806 / TLS) (Chlorobium tepidum).